The following is a 276-amino-acid chain: TCP pilus virulence regulatory protein (276 aa).

One can recognise an HTH araC/xylS-type domain in the interval 172 to 269 (EKISCLVKSD…NVAPSEYLFM (98 aa)). 2 consecutive DNA-binding regions (H-T-H motif) follow at residues 189–210 (ADICGELRTNRMILKKELESRG) and 236–259 (IKQIAYQSGFASVSYFSTVFKSTM).

It localises to the cytoplasm. Functionally, probable regulatory protein for the tcp operon. The protein is TCP pilus virulence regulatory protein (tcpN) of Vibrio cholerae serotype O1 (strain ATCC 39541 / Classical Ogawa 395 / O395).